Here is a 1035-residue protein sequence, read N- to C-terminus: NHS-like protein 3 (1035 aa).

V2 carries the N-myristoyl glycine lipid modification. 3 disordered regions span residues 23–44, 76–105, and 133–162; these read KAENDKHLSVGPGQGPGSAVDE, QEKQKLNKGGWDHGDTQSIQSSRTGPDEDN, and IQRKGSTFRPHDSFPKSGKSGRRRRERRST. A compositionally biased stretch (basic and acidic residues) spans 76–90; it reads QEKQKLNKGGWDHGD. Phosphoserine is present on residues S93, S138, S145, and S161. At T162 the chain carries Phosphothreonine. A Phosphoserine modification is found at S215. An Asymmetric dimethylarginine modification is found at R320. A phosphoserine mark is found at S322, S327, S330, S338, S339, S341, and S342. Disordered stretches follow at residues 332 to 869 and 885 to 1035; these read RSLG…APSS and SEGL…KELA. Positions 338 to 365 are enriched in low complexity; sequence SSVSSPQPRSRHPSSSSDTWSHSQSSDT. Polar residues predominate over residues 366-388; that stretch reads IVSDGSTLSSKGGSEGQPESSTA. S400, S404, and S409 each carry phosphoserine. Over residues 411-429 the composition is skewed to polar residues; that stretch reads AEASDTLSIRSSGQLSGRS. A compositionally biased stretch (basic residues) spans 431-449; sequence SLRKLKRPPPPPRRTHSLH. Over residues 517–532 the composition is skewed to low complexity; sequence RTLSPSSGYSSQSGTP. T531 is modified (phosphothreonine). Pro residues predominate over residues 543-552; sequence PASPGKAQPP. At S545 the chain carries Phosphoserine. A compositionally biased stretch (low complexity) spans 562–589; it reads SPGASVSSSLTSLCSSSSDPAPSDRSGP. At T593 the chain carries Phosphothreonine. The span at 602 to 624 shows a compositional bias: pro residues; sequence PPHPKVPAPFSPPPSKPRSPNPA. S612 is modified (phosphoserine). 2 stretches are compositionally biased toward low complexity: residues 625–645 and 652–662; these read APALAAPAVVPGPVSTTDASP and QTTLTPLQESP. 2 positions are modified to phosphoserine: S669 and S673. Composition is skewed to pro residues over residues 669-685 and 709-718; these read SPPPSPPPSYHPPPPPT and NWPPPPPPAP. A compositionally biased stretch (low complexity) spans 737-765; sequence SVASPEPAGPSGSPELVSSPAASSSSATA. Residues 771–784 are compositionally biased toward pro residues; that stretch reads PGSPDPPPAPPAPA. The segment covering 838 to 848 has biased composition (low complexity); the sequence is GAPTPALGPSA. Phosphoserine occurs at positions 858, 862, and 868. Positions 894–906 are enriched in pro residues; that stretch reads NGPPEAEPRPPQS. A phosphoserine mark is found at S929, S959, S971, and S979. Over residues 961–980 the composition is skewed to pro residues; that stretch reads KAPPPVARKPSVGVPPPASP. Residues 999–1008 are compositionally biased toward basic and acidic residues; the sequence is TQDRTKRELA.

As to expression, expressed in lung.

Functionally, able to directly activate the TNF-NFkappaB signaling pathway. The sequence is that of NHS-like protein 3 from Homo sapiens (Human).